Reading from the N-terminus, the 355-residue chain is Phenylalanine--tRNA ligase alpha subunit (355 aa).

Mg(2+) is bound at residue Glu-273.

Belongs to the class-II aminoacyl-tRNA synthetase family. Phe-tRNA synthetase alpha subunit type 1 subfamily. Tetramer of two alpha and two beta subunits. Requires Mg(2+) as cofactor.

The protein localises to the cytoplasm. It catalyses the reaction tRNA(Phe) + L-phenylalanine + ATP = L-phenylalanyl-tRNA(Phe) + AMP + diphosphate + H(+). The sequence is that of Phenylalanine--tRNA ligase alpha subunit from Bifidobacterium animalis subsp. lactis (strain AD011).